We begin with the raw amino-acid sequence, 75 residues long: Exodeoxyribonuclease 7 small subunit (75 aa).

The protein belongs to the XseB family. As to quaternary structure, heterooligomer composed of large and small subunits.

The protein resides in the cytoplasm. It carries out the reaction Exonucleolytic cleavage in either 5'- to 3'- or 3'- to 5'-direction to yield nucleoside 5'-phosphates.. Its function is as follows. Bidirectionally degrades single-stranded DNA into large acid-insoluble oligonucleotides, which are then degraded further into small acid-soluble oligonucleotides. In Anaplasma phagocytophilum (strain HZ), this protein is Exodeoxyribonuclease 7 small subunit.